The primary structure comprises 312 residues: Olfactory receptor 4K17 (312 aa).

Residues 1-25 are Extracellular-facing; sequence MKLLNQSQVSEFILLGLTSSQDVEF. An N-linked (GlcNAc...) asparagine glycan is attached at Asn-5. Residues 26 to 49 form a helical membrane-spanning segment; it reads LLFALFSVIYVVTVLGNLLIIVTV. The Cytoplasmic portion of the chain corresponds to 50 to 57; the sequence is FNTPNLNT. Residues 58-79 traverse the membrane as a helical segment; that stretch reads PMYFLLGNLSFVDMTLASFATP. Topologically, residues 80–100 are extracellular; that stretch reads KVILNLLKKQKVISFAGCFTQ. Cysteines 97 and 189 form a disulfide. The chain crosses the membrane as a helical span at residues 101 to 120; sequence IFLLHLLGGVEMVLLVSMAF. The Cytoplasmic segment spans residues 121-139; the sequence is DRYVAICKPLHYMTIMNKK. Residues 140-158 traverse the membrane as a helical segment; it reads VCVLLVVTSWLLGLLHSGF. Residues 159–195 are Extracellular-facing; sequence QIPFAVNLPFCGPNVVDSIFCDLPLVTKLACIDIYFV. The chain crosses the membrane as a helical span at residues 196-219; sequence QVVIVANSGIISLSCFIILLISYS. Residues 220 to 235 are Cytoplasmic-facing; it reads LILITIKNHSPTGQSK. Residues 236 to 258 traverse the membrane as a helical segment; the sequence is ARSTLTAHITVVILFFGPCIFIY. The Extracellular portion of the chain corresponds to 259 to 269; that stretch reads IWPFGNHSVDK. A glycan (N-linked (GlcNAc...) asparagine) is linked at Asn-264. A helical transmembrane segment spans residues 270–289; the sequence is FLAVFYTIITPILNPIIYTL. The Cytoplasmic segment spans residues 290 to 312; it reads RNKEMKISMKKLWRAFVNSREDT.

It belongs to the G-protein coupled receptor 1 family.

Its subcellular location is the cell membrane. Odorant receptor. The protein is Olfactory receptor 4K17 (OR4K17) of Homo sapiens (Human).